Consider the following 198-residue polypeptide: Recombination protein RecR (198 aa).

The segment at 57 to 72 (CEKCNTFTEAQICEVC) adopts a C4-type zinc-finger fold. One can recognise a Toprim domain in the interval 80–175 (TLLCVVETPA…AVTRLARGVP (96 aa)).

This sequence belongs to the RecR family.

May play a role in DNA repair. It seems to be involved in an RecBC-independent recombinational process of DNA repair. It may act with RecF and RecO. The sequence is that of Recombination protein RecR from Burkholderia ambifaria (strain MC40-6).